A 606-amino-acid chain; its full sequence is Methionine--tRNA ligase (606 aa).

The short motif at 14 to 24 is the 'HIGH' region element; that stretch reads PYANGPRHIGH. Zn(2+) is bound by residues C146, C149, C159, and C162. The 'KMSKS' region motif lies at 351–355; the sequence is KFSSS. S354 provides a ligand contact to ATP.

The protein belongs to the class-I aminoacyl-tRNA synthetase family. MetG type 1 subfamily. Monomer. Zn(2+) is required as a cofactor.

Its subcellular location is the cytoplasm. The catalysed reaction is tRNA(Met) + L-methionine + ATP = L-methionyl-tRNA(Met) + AMP + diphosphate. Functionally, is required not only for elongation of protein synthesis but also for the initiation of all mRNA translation through initiator tRNA(fMet) aminoacylation. This is Methionine--tRNA ligase from Thermobifida fusca (strain YX).